A 455-amino-acid polypeptide reads, in one-letter code: Ornithine decarboxylase (455 aa).

Lys67 is modified (N6-(pyridoxal phosphate)lysine). Residues Ser197, Gly234, and 271–274 contribute to the pyridoxal 5'-phosphate site; that span reads EPGR. A Phosphoserine; by CK2 modification is found at Ser297. 325 to 326 contacts substrate; the sequence is YD. Residue Cys354 is the Proton donor; shared with dimeric partner of the active site. At Cys354 the chain carries S-nitrosocysteine. Asp355 is a binding site for substrate. Tyr383 contacts pyridoxal 5'-phosphate.

It belongs to the Orn/Lys/Arg decarboxylase class-II family. In terms of assembly, homodimer. Only the dimer is catalytically active, as the active sites are constructed of residues from both monomers. It depends on pyridoxal 5'-phosphate as a cofactor.

It catalyses the reaction L-ornithine + H(+) = putrescine + CO2. Its pathway is amine and polyamine biosynthesis; putrescine biosynthesis via L-ornithine pathway; putrescine from L-ornithine: step 1/1. Inhibited by antizymes (AZs) OAZ1, OAZ2 and OAZ3 in response to polyamine levels. AZs inhibit the assembly of the functional homodimer by binding to ODC monomers. Additionally, OAZ1 targets ODC monomers for ubiquitin-independent proteolytic destruction by the 26S proteasome. Functionally, catalyzes the first and rate-limiting step of polyamine biosynthesis that converts ornithine into putrescine, which is the precursor for the polyamines, spermidine and spermine. Polyamines are essential for cell proliferation and are implicated in cellular processes, ranging from DNA replication to apoptosis. The chain is Ornithine decarboxylase (ODC1) from Cricetulus griseus (Chinese hamster).